Here is a 240-residue protein sequence, read N- to C-terminus: Protein unc-119 homolog A (240 aa).

Over residues 1–12 (MKVKKGGGGAGT) the composition is skewed to gly residues. Residues 1 to 61 (MKVKKGGGGA…GPLQRKQRIG (61 aa)) form a disordered region. Over residues 13 to 23 (GAEPASGAPGP) the composition is skewed to low complexity. Phosphoserine; by CK2 occurs at positions 37, 39, and 41. Tyr131 lines the tetradecanoate pocket.

This sequence belongs to the PDE6D/unc-119 family. Interacts with CABP4; in the absence of calcium. May interact with GTP-bound ARL1. Interacts with ARL2 and ARL3 (GTP-bound forms); this promotes the release of myristoylated cargo proteins. Found in a complex with ARL3, RP2 and UNC119; RP2 induces hydrolysis of GTP ARL3 in the complex, leading to the release of UNC119. Interacts with NPHP3 (when myristoylated). Interacts with CYS1 (when myristoylated). Interacts with MACIR; interaction only takes place when UNC119 is not liganded with myristoylated proteins. Interacts with LCK; this interaction plays a crucial role in activation of LCK. Interacts with FYN. Interacts with RAB11A; in a cell cycle-dependent manner. Interacts with LYN (via SH2 and SH3 domains); leading to LYN activation. Interacts with DNM1; leading to a decrease of DNM1 GTPase activity. Found in a complex with ABL1, ABL2, CRK and UNC119; leading to the inhibition of CRK phosphorylation by ABL kinases. Interacts with CD44. Interacts with KLHL18 (via kelch repeats). Interacts with PPP3CA, PPP3CB and PPP3CC. Interacts with USP48; this interaction promotes UNC119 stability. Post-translationally, phosphorylation suppresses its interaction with KLHL18 and down-regulates its KLHL18-mediated degradation. Phosphorylated more under light conditions than dark conditions. Dephosphorylated by calcineurin.

Its subcellular location is the cytoplasm. It localises to the cytoskeleton. It is found in the microtubule organizing center. The protein localises to the centrosome. The protein resides in the spindle. Its subcellular location is the spindle pole. Its function is as follows. Involved in synaptic functions in photoreceptor cells, the signal transduction in immune cells as a Src family kinase activator, endosome recycling, the uptake of bacteria and endocytosis, protein trafficking in sensory neurons and as lipid-binding chaperone with specificity for a diverse subset of myristoylated proteins. Specifically binds the myristoyl moiety of a subset of N-terminally myristoylated proteins and is required for their localization. Binds myristoylated GNAT1 and is required for G-protein localization and trafficking in sensory neurons. Probably plays a role in trafficking proteins in photoreceptor cells. Plays important roles in mediating Src family kinase signals for the completion of cytokinesis via RAB11A. This chain is Protein unc-119 homolog A (UNC119), found in Canis lupus familiaris (Dog).